The following is a 379-amino-acid chain: Glutamate 5-kinase (379 aa).

Lys15 is an ATP binding site. Residues Ser54, Asp144, and Asn156 each coordinate substrate. 176 to 177 (TD) serves as a coordination point for ATP. A PUA domain is found at 282-360 (KGVILVDAGA…GEIERALGYK (79 aa)).

Belongs to the glutamate 5-kinase family.

Its subcellular location is the cytoplasm. The catalysed reaction is L-glutamate + ATP = L-glutamyl 5-phosphate + ADP. Its pathway is amino-acid biosynthesis; L-proline biosynthesis; L-glutamate 5-semialdehyde from L-glutamate: step 1/2. Catalyzes the transfer of a phosphate group to glutamate to form L-glutamate 5-phosphate. In Anaeromyxobacter dehalogenans (strain 2CP-C), this protein is Glutamate 5-kinase.